The sequence spans 483 residues: Regulatory protein ViaA (483 aa).

The protein belongs to the ViaA family. As to quaternary structure, homodimer. Interacts with RavA.

Its subcellular location is the cytoplasm. Its function is as follows. Component of the RavA-ViaA chaperone complex, which may act on the membrane to optimize the function of some of the respiratory chains. ViaA stimulates the ATPase activity of RavA. This is Regulatory protein ViaA from Salmonella typhi.